We begin with the raw amino-acid sequence, 906 residues long: Nuclear factor NF-kappa-B p100 subunit (906 aa).

Residues 34-223 enclose the RHD domain; the sequence is AVGPYLVIIE…DPIHDSKSPG (190 aa). Positions 336–340 match the Nuclear localization signal motif; that stretch reads RNRKK. Residues 345-374 form a GRR region; the sequence is FPQHFGGGSHMGGAGGAGGFGAGGGGNLSF. ANK repeat units lie at residues 472-501, 511-540, 544-573, 582-611, 616-646, and 650-679; these read NGDT…SIPS, LQQT…NPTL, YGNS…SATP, QGLL…DVNG, GGRT…NVNS, and AGNT…DVQR. Disordered stretches follow at residues 677–734 and 857–906; these read VQRE…GPRQ and EPLE…QQVH. Residues 684-695 are compositionally biased toward low complexity; it reads PVSPSSVRVPSS. Positions 697-708 are enriched in acidic residues; the sequence is TDGDPEEQEQEQ. Residues 771-857 enclose the Death domain; sequence RNHLLSLDTD…GAVRMLRKPE (87 aa).

In terms of assembly, component of the NF-kappa-B RelB-p52 complex. While translation occurs, the particular unfolded structure after the GRR repeat promotes the generation of p52 making it an acceptable substrate for the proteasome. This process is known as cotranslational processing. The processed form is active and the unprocessed form acts as an inhibitor (I kappa B-like), being able to form cytosolic complexes with NF-kappa B, trapping it in the cytoplasm. Complete folding of the region downstream of the GRR repeat precludes processing. Post-translationally, constitutive processing is tightly suppressed by its C-terminal processing inhibitory domain, named PID, which contains the death domain.

The protein localises to the nucleus. Its subcellular location is the cytoplasm. In terms of biological role, NF-kappa-B is a pleiotropic transcription factor present in almost all cell types and is the endpoint of a series of signal transduction events that are initiated by a vast array of stimuli related to many biological processes such as inflammation, immunity, differentiation, cell growth, tumorigenesis and apoptosis. NF-kappa-B is a homo- or heterodimeric complex formed by the Rel-like domain-containing proteins RELA/p65, RELB, NFKB1/p105, NFKB1/p50, REL and NFKB2/p52. The dimers bind at kappa-B sites in the DNA of their target genes and the individual dimers have distinct preferences for different kappa-B sites that they can bind with distinguishable affinity and specificity. Different dimer combinations act as transcriptional activators or repressors, respectively. NF-kappa-B is controlled by various mechanisms of post-translational modification and subcellular compartmentalization as well as by interactions with other cofactors or corepressors. NF-kappa-B complexes are held in the cytoplasm in an inactive state complexed with members of the NF-kappa-B inhibitor (I-kappa-B) family. In a conventional activation pathway, I-kappa-B is phosphorylated by I-kappa-B kinases (IKKs) in response to different activators, subsequently degraded thus liberating the active NF-kappa-B complex which translocates to the nucleus. In a non-canonical activation pathway, the MAP3K14-activated CHUK/IKKA homodimer phosphorylates NFKB2/p100 associated with RelB, inducing its proteolytic processing to NFKB2/p52 and the formation of NF-kappa-B RelB-p52 complexes. The NF-kappa-B heterodimeric RelB-p52 complex is a transcriptional activator. NFKB2 appears to have dual functions such as cytoplasmic retention of attached NF-kappa-B proteins by p100 and generation of p52 by a cotranslational processing. The proteasome-mediated process ensures the production of both p52 and p100 and preserves their independent function. p52 binds to the kappa-B consensus sequence 5'-GGRNNYYCC-3', located in the enhancer region of genes involved in immune response and acute phase reactions. In concert with RELB, may play a role in the regulation of the circadian clock. The chain is Nuclear factor NF-kappa-B p100 subunit (NFKB2) from Gallus gallus (Chicken).